A 511-amino-acid polypeptide reads, in one-letter code: ATP synthase subunit alpha 1 (511 aa).

174 to 181 (GDRQTGKT) provides a ligand contact to ATP.

The protein belongs to the ATPase alpha/beta chains family. As to quaternary structure, F-type ATPases have 2 components, CF(1) - the catalytic core - and CF(0) - the membrane proton channel. CF(1) has five subunits: alpha(3), beta(3), gamma(1), delta(1), epsilon(1). CF(0) has four main subunits: a(1), b(1), b'(1) and c(9-12).

The protein localises to the cell inner membrane. The enzyme catalyses ATP + H2O + 4 H(+)(in) = ADP + phosphate + 5 H(+)(out). In terms of biological role, produces ATP from ADP in the presence of a proton gradient across the membrane. The alpha chain is a regulatory subunit. This is ATP synthase subunit alpha 1 from Chlorobium luteolum (strain DSM 273 / BCRC 81028 / 2530) (Pelodictyon luteolum).